A 312-amino-acid chain; its full sequence is D-alanine--D-alanine ligase (312 aa).

The 201-residue stretch at 108–308 folds into the ATP-grasp domain; that stretch reads KLVWQQTGIP…YSELVVKVLS (201 aa). 138-193 provides a ligand contact to ATP; the sequence is VAKLGMPLFVKPASEGSSVAVEKVKSADALPAALEEAAKHDKIVIVEKSIEGGGEY. Residues Asp262, Glu275, and Asn277 each contribute to the Mg(2+) site.

This sequence belongs to the D-alanine--D-alanine ligase family. Requires Mg(2+) as cofactor. It depends on Mn(2+) as a cofactor.

It localises to the cytoplasm. The catalysed reaction is 2 D-alanine + ATP = D-alanyl-D-alanine + ADP + phosphate + H(+). It participates in cell wall biogenesis; peptidoglycan biosynthesis. Functionally, cell wall formation. The polypeptide is D-alanine--D-alanine ligase (Burkholderia thailandensis (strain ATCC 700388 / DSM 13276 / CCUG 48851 / CIP 106301 / E264)).